The sequence spans 162 residues: Lipoprotein signal peptidase (162 aa).

4 helical membrane passes run 9-29 (LCLV…LVAT), 39-59 (VIHG…FGLF), 66-86 (VRKF…LWLY), and 95-115 (VLSF…IDRF). Residues Asp122 and Asp140 contribute to the active site. A helical transmembrane segment spans residues 136-156 (FNVADSAITIGMVVFVYHVIF).

It belongs to the peptidase A8 family.

It localises to the cell inner membrane. It carries out the reaction Release of signal peptides from bacterial membrane prolipoproteins. Hydrolyzes -Xaa-Yaa-Zaa-|-(S,diacylglyceryl)Cys-, in which Xaa is hydrophobic (preferably Leu), and Yaa (Ala or Ser) and Zaa (Gly or Ala) have small, neutral side chains.. It participates in protein modification; lipoprotein biosynthesis (signal peptide cleavage). Its function is as follows. This protein specifically catalyzes the removal of signal peptides from prolipoproteins. This Desulforapulum autotrophicum (strain ATCC 43914 / DSM 3382 / VKM B-1955 / HRM2) (Desulfobacterium autotrophicum) protein is Lipoprotein signal peptidase.